We begin with the raw amino-acid sequence, 205 residues long: Potassium-transporting ATPase KdpC subunit (205 aa).

Residues 9–29 (VFAVLFLFILGFVYPTVTSLI) traverse the membrane as a helical segment.

Belongs to the KdpC family. The system is composed of three essential subunits: KdpA, KdpB and KdpC.

Its subcellular location is the cell membrane. In terms of biological role, part of the high-affinity ATP-driven potassium transport (or Kdp) system, which catalyzes the hydrolysis of ATP coupled with the electrogenic transport of potassium into the cytoplasm. This subunit acts as a catalytic chaperone that increases the ATP-binding affinity of the ATP-hydrolyzing subunit KdpB by the formation of a transient KdpB/KdpC/ATP ternary complex. This Thermoplasma acidophilum (strain ATCC 25905 / DSM 1728 / JCM 9062 / NBRC 15155 / AMRC-C165) protein is Potassium-transporting ATPase KdpC subunit.